The chain runs to 295 residues: Elongation factor Ts (295 aa).

The segment at 79–82 is involved in Mg(2+) ion dislocation from EF-Tu; sequence TDFV.

The protein belongs to the EF-Ts family.

It localises to the cytoplasm. Its function is as follows. Associates with the EF-Tu.GDP complex and induces the exchange of GDP to GTP. It remains bound to the aminoacyl-tRNA.EF-Tu.GTP complex up to the GTP hydrolysis stage on the ribosome. This Bacillus cereus (strain ATCC 10987 / NRS 248) protein is Elongation factor Ts.